A 459-amino-acid chain; its full sequence is Transcriptional coactivator YAP1 (459 aa).

Residues serine 21, serine 69, serine 87, and serine 119 each carry the phosphoserine; by LATS1 and LATS2 modification. Disordered stretches follow at residues 51 to 88 and 103 to 129; these read LPDS…AHSS and SGMA…VPLP. 2 consecutive WW domains span residues 126–159 and 186–219; these read VPLP…DPRK and GPLP…DPRL. 2 disordered regions span residues 231-254 and 307-364; these read TQSA…MGGN and PTSM…SSYS. Residues 247 to 459 form a transactivation domain region; it reads HGGVMGGNNQ…IDKESFLTWL (213 aa). Polar residues-rich tracts occupy residues 307–347 and 355–364; these read PTSM…SGTY and DSGLSMSSYS.

It belongs to the YAP1 family. In terms of processing, phosphorylated by lats1 and lats2; leading to cytoplasmic translocation and inactivation. In terms of tissue distribution, ubiquitously expressed throughout development.

Its subcellular location is the cytoplasm. It is found in the nucleus. The protein resides in the cell junction. It localises to the tight junction. The protein localises to the cell membrane. Transcriptional regulator which can act both as a coactivator and a corepressor and is the critical downstream regulatory target in the Hippo signaling pathway that plays a pivotal role in organ size control and tumor suppression by restricting proliferation and promoting apoptosis. Plays a key role in tissue tension and 3D tissue shape by regulating cortical actomyosin network formation. The sequence is that of Transcriptional coactivator YAP1 from Oryzias latipes (Japanese rice fish).